A 729-amino-acid chain; its full sequence is Pentatricopeptide repeat-containing protein At4g04370 (729 aa).

17 PPR repeats span residues 10–44 (STKYFNSHINHLSSHGDHKQVLSTFSSMLANKLLP), 45–79 (DTFTFPSLLKACASLQRLSFGLSIHQQVLVNGFSS), 80–110 (DFYISSSLVNLYAKFGLLAHARKVFEEMRER), 111–145 (DVVHWTAMIGCYSRAGIVGEACSLVNEMRFQGIKP), 178–208 (DIAVMNSMLNLYCKCDHVGDAKDLFDQMEQR), 209–243 (DMVSWNTMISGYASVGNMSEILKLLYRMRGDGLRP), 244–278 (DQQTFGASLSVSGTMCDLEMGRMLHCQIVKTGFDV), 279–309 (DMHLKTALITMYLKCGKEEASYRVLETIPNK), 310–344 (DVVCWTVMISGLMRLGRAEKALIVFSEMLQSGSDL), 345–379 (SSEAIASVVASCAQLGSFDLGASVHGYVLRHGYTL), 380–414 (DTPALNSLITMYAKCGHLDKSLVIFERMNERDLVS), 415–445 (WNAIISGYAQNVDLCKALLLFEEMKFKTVQQ), 447–481 (DSFTVVSLLQACSSAGALPVGKLIHCIVIRSFIRP), 482–512 (CSLVDTALVDMYSKCGYLEAAQRCFDSISWK), 513–547 (DVVSWGILIAGYGFHGKGDIALEIYSEFLHSGMEP), 548–583 (NHVIFLAVLSSCSHNGMVQQGLKIFSSMVRDFGVEP), and 584–618 (NHEHLACVVDLLCRAKRIEDAFKFYKENFTRPSID). The type E motif stretch occupies residues 619 to 694 (VLGIILDACR…LPGWSKIEMN (76 aa)). The tract at residues 695-723 (GKTTTFFMNHTSHSDDTVSLLKLLSREMM) is type E(+) motif.

Belongs to the PPR family. PCMP-E subfamily.

The chain is Pentatricopeptide repeat-containing protein At4g04370 (PCMP-E99) from Arabidopsis thaliana (Mouse-ear cress).